Consider the following 188-residue polypeptide: MKANDIKKGNVVEYNGGIYQIRDIERSSPQGRGGNVRFRFIMYSVPGGVKTDASLDADDNLPDVELLRRLSTFSYKDGEAFVFMDDEDFTPYTLDADVIGTDAGYITDGLTGIYVQVIDDQPVAVQLPQTVTLEVVETPPELKGGTATKRPKPAKLNTGMEIMVPEYITNGERVLVNTTTGEFAGRAD.

This sequence belongs to the elongation factor P family.

The polypeptide is Elongation factor P-like protein (Xanthomonas oryzae pv. oryzae (strain MAFF 311018)).